The chain runs to 117 residues: Large ribosomal subunit protein uL18 (117 aa).

It belongs to the universal ribosomal protein uL18 family. In terms of assembly, part of the 50S ribosomal subunit; part of the 5S rRNA/L5/L18/L25 subcomplex. Contacts the 5S and 23S rRNAs.

This is one of the proteins that bind and probably mediate the attachment of the 5S RNA into the large ribosomal subunit, where it forms part of the central protuberance. The polypeptide is Large ribosomal subunit protein uL18 (Klebsiella pneumoniae (strain 342)).